The sequence spans 124 residues: Ragulator complex protein LAMTOR3 homolog (124 aa).

This sequence belongs to the LAMTOR3 family. Part of the Ragulator complex composed of Lamtor3, Lamtor2, CG14184, CG14812, and Lamtor4.

In terms of biological role, regulator of the TOR pathway, a signaling cascade that promotes cell growth in response to growth factors, energy levels, and amino acids. As part of the Ragulator complex, may activate the TOR signaling cascade in response to amino acids. The chain is Ragulator complex protein LAMTOR3 homolog from Drosophila melanogaster (Fruit fly).